We begin with the raw amino-acid sequence, 195 residues long: Dephospho-CoA kinase (195 aa).

Positions 3-195 (KIGLTGGIGS…ANMKNVIAEI (193 aa)) constitute a DPCK domain. 11–16 (GSGKST) is an ATP binding site.

Belongs to the CoaE family.

It localises to the cytoplasm. It carries out the reaction 3'-dephospho-CoA + ATP = ADP + CoA + H(+). It functions in the pathway cofactor biosynthesis; coenzyme A biosynthesis; CoA from (R)-pantothenate: step 5/5. Catalyzes the phosphorylation of the 3'-hydroxyl group of dephosphocoenzyme A to form coenzyme A. The polypeptide is Dephospho-CoA kinase (Corynebacterium glutamicum (Brevibacterium saccharolyticum)).